The primary structure comprises 340 residues: Glycerol-3-phosphate dehydrogenase [NAD(P)+] (340 aa).

Positions 11, 12, 33, and 106 each coordinate NADPH. Residues Lys-106, Gly-137, and Ser-139 each coordinate sn-glycerol 3-phosphate. Ala-141 lines the NADPH pocket. The sn-glycerol 3-phosphate site is built by Lys-192, Asp-245, Ser-255, Arg-256, and Asn-257. Lys-192 acts as the Proton acceptor in catalysis. An NADPH-binding site is contributed by Arg-256. NADPH is bound by residues Val-280 and Glu-282.

This sequence belongs to the NAD-dependent glycerol-3-phosphate dehydrogenase family.

It localises to the cytoplasm. The catalysed reaction is sn-glycerol 3-phosphate + NAD(+) = dihydroxyacetone phosphate + NADH + H(+). It catalyses the reaction sn-glycerol 3-phosphate + NADP(+) = dihydroxyacetone phosphate + NADPH + H(+). Its pathway is membrane lipid metabolism; glycerophospholipid metabolism. Catalyzes the reduction of the glycolytic intermediate dihydroxyacetone phosphate (DHAP) to sn-glycerol 3-phosphate (G3P), the key precursor for phospholipid synthesis. This Bacillus cereus (strain B4264) protein is Glycerol-3-phosphate dehydrogenase [NAD(P)+].